We begin with the raw amino-acid sequence, 543 residues long: Serendipity locus protein alpha (543 aa).

It is found in the cytoplasm. The protein resides in the cell membrane. Functionally, required for the cellularization of the syncytial blastoderm embryo. Involved in the localization of the actin filaments just prior to and during plasma membrane invagination. Sry-alpha together with nullo and bnk may provide auxiliary functions, by acting both to stabilize a large and dynamic microfilament structure and regulate its functions. This chain is Serendipity locus protein alpha (Sry-alpha), found in Drosophila subobscura (Fruit fly).